The chain runs to 292 residues: Undecaprenyl-diphosphatase (292 aa).

The next 7 membrane-spanning stretches (helical) occupy residues 1–21 (MSLV…FLPV), 46–66 (FVTI…RADI), 90–110 (LGWY…LLEH), 114–134 (ALGN…LLAA), 192–212 (FLLS…STVP), 225–245 (VVGT…LLAW), and 253–273 (VFVV…LSGV).

This sequence belongs to the UppP family.

The protein localises to the cell inner membrane. It carries out the reaction di-trans,octa-cis-undecaprenyl diphosphate + H2O = di-trans,octa-cis-undecaprenyl phosphate + phosphate + H(+). Its function is as follows. Catalyzes the dephosphorylation of undecaprenyl diphosphate (UPP). Confers resistance to bacitracin. The polypeptide is Undecaprenyl-diphosphatase (Anaeromyxobacter dehalogenans (strain 2CP-1 / ATCC BAA-258)).